A 229-amino-acid polypeptide reads, in one-letter code: Cytochrome b6-f complex iron-sulfur subunit, chloroplastic (229 aa).

The transit peptide at M1 to Q50 directs the protein to the chloroplast. A helical transmembrane segment spans residues L68–F90. In terms of domain architecture, Rieske spans A115–L211. The [2Fe-2S] cluster site is built by C157, H159, C175, and H178. The cysteines at positions 162 and 177 are disulfide-linked. Phosphoserine is present on S196.

It belongs to the Rieske iron-sulfur protein family. The 4 large subunits of the cytochrome b6-f complex are cytochrome b6, subunit IV (17 kDa polypeptide, petD), cytochrome f and the Rieske protein, while the 4 small subunits are petG, petL, petM and petN. The complex functions as a dimer. Interacts with PGRL1A. Component of a mitochondrial large protein complex that contains, at least, MIC60, DGS1, TOM40, TOM20 proteins, and petC/RISP. [2Fe-2S] cluster is required as a cofactor. As to expression, confined to photosynthetic tissues, with highest levels in flowers. In leaves, mostly localized in mesophyll cells. In stems, confined to the peripheral ring of chlorenchyma and adjoining groups of cells associated with the vascular bundles. In siliques, present in green wall of the fruit and in peduncle but not in the translucide white septum of the seeds.

The protein resides in the plastid. Its subcellular location is the chloroplast thylakoid membrane. It is found in the mitochondrion inner membrane. It catalyses the reaction 2 oxidized [plastocyanin] + a plastoquinol + 2 H(+)(in) = 2 reduced [plastocyanin] + a plastoquinone + 4 H(+)(out). Essential protein for photoautotrophism. Confers resistance to photo-oxidative damages by contributing to the thermal dissipation of light energy and to lumenal acidification (increase of pH gradient). Component of the cytochrome b6-f complex, which mediates electron transfer between photosystem II (PSII) and photosystem I (PSI), cyclic electron flow around PSI, and state transitions. The protein is Cytochrome b6-f complex iron-sulfur subunit, chloroplastic of Arabidopsis thaliana (Mouse-ear cress).